The sequence spans 612 residues: RNA polymerase sigma factor RpoD (612 aa).

The segment covering 191-206 (QQNNEEDEENNQEDHE) has biased composition (acidic residues). Residues 191–210 (QQNNEEDEENNQEDHEDDHS) are disordered. The segment at 378 to 448 (MVEANLRLVI…TRSIADQART (71 aa)) is sigma-70 factor domain-2. The Interaction with polymerase core subunit RpoC motif lies at 402–405 (DLIQ). The tract at residues 457-533 (ETINKLNRIS…DTTLELPLDS (77 aa)) is sigma-70 factor domain-3. A sigma-70 factor domain-4 region spans residues 546 to 599 (VLSGLTAREAKVLRMRFGIDMNTDHTLEEVGKQFDVTRERIRQIEAKALRKLRH). Positions 572-591 (LEEVGKQFDVTRERIRQIEA) form a DNA-binding region, H-T-H motif.

Belongs to the sigma-70 factor family. RpoD/SigA subfamily. Interacts transiently with the RNA polymerase catalytic core.

It is found in the cytoplasm. Functionally, sigma factors are initiation factors that promote the attachment of RNA polymerase to specific initiation sites and are then released. This sigma factor is the primary sigma factor during exponential growth. This is RNA polymerase sigma factor RpoD from Buchnera aphidicola subsp. Acyrthosiphon pisum (strain APS) (Acyrthosiphon pisum symbiotic bacterium).